We begin with the raw amino-acid sequence, 145 residues long: Large ribosomal subunit protein uL13 (145 aa).

This sequence belongs to the universal ribosomal protein uL13 family. In terms of assembly, part of the 50S ribosomal subunit.

Its function is as follows. This protein is one of the early assembly proteins of the 50S ribosomal subunit, although it is not seen to bind rRNA by itself. It is important during the early stages of 50S assembly. This chain is Large ribosomal subunit protein uL13, found in Staphylococcus carnosus (strain TM300).